The chain runs to 414 residues: MATTPAPPGAPPKPTWDPRSATPLPWLRPTIRIRLTLLYGGMFLIAGILLLSIIYLLAAQAVRTGNEPLYKIVDFTDLKVSSSTCPVVDNGGLSLSDFNAAISDCMDHQRKVALDNLLSRSLLALLGLAVIAFAFGYAMAGRVLSPLGRITRTARAVAGSDLSRRIELDGPDDELKELADTFDDMLERLQRAFTAQQRFVGNASHELRTPLAINRTLLEVHLSDPGAPVELQQLGKTLLATNERSELLVEGLLLLARSDNQIVERKPVDLAEVAGQAIDQVHAEAESKGVEVRGTREAAVVQGNGVLLERIALNLVQNAVRYNVAGQGWVEVATAVENGQAVLVVTNTGPVVPAYEVDNLFEPFRRLRTERTGSDKGVGLGLSIARSVARAHGGHISAQPREGGGLVMRVTLPV.

The span at 1–15 (MATTPAPPGAPPKPT) shows a compositional bias: pro residues. The disordered stretch occupies residues 1–21 (MATTPAPPGAPPKPTWDPRSA). Transmembrane regions (helical) follow at residues 37 to 57 (LLYG…IYLL) and 121 to 141 (SLLA…AMAG). An HAMP domain is found at 142 to 194 (RVLSPLGRITRTARAVAGSDLSRRIELDGPDDELKELADTFDDMLERLQRAFT). In terms of domain architecture, Histidine kinase spans 202–414 (NASHELRTPL…GLVMRVTLPV (213 aa)). Residue histidine 205 is modified to Phosphohistidine; by autocatalysis.

It is found in the cell membrane. The catalysed reaction is ATP + protein L-histidine = ADP + protein N-phospho-L-histidine.. Member of the two-component regulatory system CutS/CutR, involved in the regulation of copper metabolism. In Streptomyces coelicolor (strain ATCC BAA-471 / A3(2) / M145), this protein is Sensor protein CutS (cutS).